The following is a 369-amino-acid chain: Xylene/toluene monooxygenase hydroxylase component XylM (369 aa).

Transmembrane regions (helical) follow at residues 8–28 (LIPV…YWVW), 60–80 (LTQY…VFGV), and 91–111 (LQVA…TLPV). Positions 113, 117, 143, 147, and 148 each coordinate Fe cation. The helical transmembrane segment at 207 to 227 (VALLLALPGLVSYLGGPALGL) threads the bilayer. Fe cation is bound by residues His282, His285, and His286. Residues 305–325 (MPSLFVCFLLGLIPPLWFALI) form a helical membrane-spanning segment.

The protein belongs to the fatty acid desaturase type 1 family. AlkB subfamily. As to quaternary structure, the xylene/toluene monooxygenase is composed of two subunits: the electron transfer component XylA and the hydroxylase component XylM. Fe(2+) is required as a cofactor.

The protein localises to the cell inner membrane. The enzyme catalyses m-xylene + 2 reduced [2Fe-2S]-[ferredoxin] + O2 + 2 H(+) = 3-methylbenzyl alcohol + 2 oxidized [2Fe-2S]-[ferredoxin] + H2O. It catalyses the reaction p-xylene + 2 reduced [2Fe-2S]-[ferredoxin] + O2 + 2 H(+) = 4-methylbenzyl alcohol + 2 oxidized [2Fe-2S]-[ferredoxin] + H2O. The catalysed reaction is toluene + 2 reduced [2Fe-2S]-[ferredoxin] + O2 + 2 H(+) = benzyl alcohol + 2 oxidized [2Fe-2S]-[ferredoxin] + H2O. In terms of biological role, component of a monooxygenase that catalyzes the first step in the degradation of xylenes and toluenes. XylM catalyzes the hydroxylation of the methyl side chain of xylenes and toluenes. The electrons are provided by the electron transfer component XylA. The best substrates are m-xylene and p-xylene, followed by toluene. Shows weak activity with o-xylene. In vitro, is also active with substituted compounds, such as chlorotoluenes. Cannot use benzyl alcohol. In Pseudomonas putida (Arthrobacter siderocapsulatus), this protein is Xylene/toluene monooxygenase hydroxylase component XylM.